A 231-amino-acid chain; its full sequence is Ribose-5-phosphate isomerase A (231 aa).

Substrate-binding positions include 32–35, 85–88, and 98–101; these read TGST, DGAD, and KGGG. Glu-107 functions as the Proton acceptor in the catalytic mechanism. Lys-125 lines the substrate pocket.

The protein belongs to the ribose 5-phosphate isomerase family. Homodimer.

It catalyses the reaction aldehydo-D-ribose 5-phosphate = D-ribulose 5-phosphate. Its pathway is carbohydrate degradation; pentose phosphate pathway; D-ribose 5-phosphate from D-ribulose 5-phosphate (non-oxidative stage): step 1/1. Catalyzes the reversible conversion of ribose-5-phosphate to ribulose 5-phosphate. This chain is Ribose-5-phosphate isomerase A, found in Burkholderia cenocepacia (strain ATCC BAA-245 / DSM 16553 / LMG 16656 / NCTC 13227 / J2315 / CF5610) (Burkholderia cepacia (strain J2315)).